Here is a 369-residue protein sequence, read N- to C-terminus: tRNA/tmRNA (uracil-C(5))-methyltransferase (369 aa).

Positions 190, 218, 223, 239, and 301 each coordinate S-adenosyl-L-methionine. The active-site Nucleophile is C326. The active-site Proton acceptor is E360.

This sequence belongs to the class I-like SAM-binding methyltransferase superfamily. RNA M5U methyltransferase family. TrmA subfamily.

The catalysed reaction is uridine(54) in tRNA + S-adenosyl-L-methionine = 5-methyluridine(54) in tRNA + S-adenosyl-L-homocysteine + H(+). The enzyme catalyses uridine(341) in tmRNA + S-adenosyl-L-methionine = 5-methyluridine(341) in tmRNA + S-adenosyl-L-homocysteine + H(+). In terms of biological role, dual-specificity methyltransferase that catalyzes the formation of 5-methyluridine at position 54 (m5U54) in all tRNAs, and that of position 341 (m5U341) in tmRNA (transfer-mRNA). This chain is tRNA/tmRNA (uracil-C(5))-methyltransferase, found in Vibrio vulnificus (strain CMCP6).